The chain runs to 289 residues: 4-diphosphocytidyl-2-C-methyl-D-erythritol kinase (289 aa).

Residue K10 is part of the active site. 94–104 is a binding site for ATP; it reads PVAAGLAGGSS. D136 is a catalytic residue.

Belongs to the GHMP kinase family. IspE subfamily.

The enzyme catalyses 4-CDP-2-C-methyl-D-erythritol + ATP = 4-CDP-2-C-methyl-D-erythritol 2-phosphate + ADP + H(+). The protein operates within isoprenoid biosynthesis; isopentenyl diphosphate biosynthesis via DXP pathway; isopentenyl diphosphate from 1-deoxy-D-xylulose 5-phosphate: step 3/6. Functionally, catalyzes the phosphorylation of the position 2 hydroxy group of 4-diphosphocytidyl-2C-methyl-D-erythritol. This Bacillus pumilus (strain SAFR-032) protein is 4-diphosphocytidyl-2-C-methyl-D-erythritol kinase.